The sequence spans 292 residues: Protein CHLOROPLAST ENHANCING STRESS TOLERANCE, chloroplastic (292 aa).

Pro residues predominate over residues 1–15; it reads MALLSPPSPPPPLPP. Residues 1–67 constitute a chloroplast transit peptide; that stretch reads MALLSPPSPP…RSSRRRRRVA (67 aa). Disordered regions lie at residues 1 to 119 and 206 to 225; these read MALL…DLED and MEAPKKKSKPGKSVYAKATD. Composition is skewed to low complexity over residues 49 to 58 and 94 to 107; these read STANARAYSR and ASSDGAAGDIASSA. Residues 267-287 form a helical membrane-spanning segment; the sequence is ALYLLTAFPVIIGISVVLILF.

This sequence belongs to the Y3IP1/CEST family.

It is found in the plastid. The protein localises to the chloroplast thylakoid membrane. Functionally, involved in light-induced chloroplast development and growth. Involved in the plant response to abiotic and photooxidative stresses. May be involved in the suppression of photooxidative damage. The polypeptide is Protein CHLOROPLAST ENHANCING STRESS TOLERANCE, chloroplastic (Oryza sativa subsp. indica (Rice)).